Here is a 103-residue protein sequence, read N- to C-terminus: Pyrimidine/purine nucleoside phosphorylase (103 aa).

Belongs to the nucleoside phosphorylase PpnP family.

The enzyme catalyses a purine D-ribonucleoside + phosphate = a purine nucleobase + alpha-D-ribose 1-phosphate. It carries out the reaction adenosine + phosphate = alpha-D-ribose 1-phosphate + adenine. The catalysed reaction is cytidine + phosphate = cytosine + alpha-D-ribose 1-phosphate. It catalyses the reaction guanosine + phosphate = alpha-D-ribose 1-phosphate + guanine. The enzyme catalyses inosine + phosphate = alpha-D-ribose 1-phosphate + hypoxanthine. It carries out the reaction thymidine + phosphate = 2-deoxy-alpha-D-ribose 1-phosphate + thymine. The catalysed reaction is uridine + phosphate = alpha-D-ribose 1-phosphate + uracil. It catalyses the reaction xanthosine + phosphate = alpha-D-ribose 1-phosphate + xanthine. In terms of biological role, catalyzes the phosphorolysis of diverse nucleosides, yielding D-ribose 1-phosphate and the respective free bases. Can use uridine, adenosine, guanosine, cytidine, thymidine, inosine and xanthosine as substrates. Also catalyzes the reverse reactions. In Shewanella frigidimarina (strain NCIMB 400), this protein is Pyrimidine/purine nucleoside phosphorylase.